We begin with the raw amino-acid sequence, 320 residues long: Ferrochelatase (320 aa).

Fe cation is bound by residues His194 and Glu275.

Belongs to the ferrochelatase family.

It is found in the cytoplasm. The enzyme catalyses heme b + 2 H(+) = protoporphyrin IX + Fe(2+). It functions in the pathway porphyrin-containing compound metabolism; protoheme biosynthesis; protoheme from protoporphyrin-IX: step 1/1. In terms of biological role, catalyzes the ferrous insertion into protoporphyrin IX. In Pectobacterium atrosepticum (strain SCRI 1043 / ATCC BAA-672) (Erwinia carotovora subsp. atroseptica), this protein is Ferrochelatase.